The chain runs to 37 residues: Large ribosomal subunit protein bL36c (37 aa).

This sequence belongs to the bacterial ribosomal protein bL36 family.

It is found in the plastid. The protein resides in the chloroplast. The protein is Large ribosomal subunit protein bL36c of Lolium perenne (Perennial ryegrass).